A 201-amino-acid chain; its full sequence is Large ribosomal subunit protein uL4 (201 aa).

The segment at Q46 to G71 is disordered.

This sequence belongs to the universal ribosomal protein uL4 family. Part of the 50S ribosomal subunit.

One of the primary rRNA binding proteins, this protein initially binds near the 5'-end of the 23S rRNA. It is important during the early stages of 50S assembly. It makes multiple contacts with different domains of the 23S rRNA in the assembled 50S subunit and ribosome. Functionally, forms part of the polypeptide exit tunnel. The sequence is that of Large ribosomal subunit protein uL4 from Shewanella woodyi (strain ATCC 51908 / MS32).